Consider the following 2260-residue polypeptide: Protein Ycf2 (2260 aa).

1614-1621 is an ATP binding site; it reads GSIGTGRS.

The protein belongs to the Ycf2 family.

The protein localises to the plastid. It localises to the chloroplast stroma. In terms of biological role, probable ATPase of unknown function. Its presence in a non-photosynthetic plant (Epifagus virginiana) and experiments in tobacco indicate that it has an essential function which is probably not related to photosynthesis. In Dioscorea elephantipes (Elephant's foot yam), this protein is Protein Ycf2.